The primary structure comprises 136 residues: uncharacterized protein (136 aa).

Its subcellular location is the mitochondrion. This is an uncharacterized protein from Arabidopsis thaliana (Mouse-ear cress).